A 278-amino-acid chain; its full sequence is Elongation factor Ts (278 aa).

Residues 81-84 (TDFV) form an involved in Mg(2+) ion dislocation from EF-Tu region.

Belongs to the EF-Ts family.

The protein localises to the cytoplasm. Functionally, associates with the EF-Tu.GDP complex and induces the exchange of GDP to GTP. It remains bound to the aminoacyl-tRNA.EF-Tu.GTP complex up to the GTP hydrolysis stage on the ribosome. The chain is Elongation factor Ts from Thermobifida fusca (strain YX).